A 345-amino-acid chain; its full sequence is Phosphoribosylformylglycinamidine cyclo-ligase (345 aa).

This sequence belongs to the AIR synthase family.

The protein localises to the cytoplasm. The catalysed reaction is 2-formamido-N(1)-(5-O-phospho-beta-D-ribosyl)acetamidine + ATP = 5-amino-1-(5-phospho-beta-D-ribosyl)imidazole + ADP + phosphate + H(+). It participates in purine metabolism; IMP biosynthesis via de novo pathway; 5-amino-1-(5-phospho-D-ribosyl)imidazole from N(2)-formyl-N(1)-(5-phospho-D-ribosyl)glycinamide: step 2/2. In Bifidobacterium longum subsp. infantis (strain ATCC 15697 / DSM 20088 / JCM 1222 / NCTC 11817 / S12), this protein is Phosphoribosylformylglycinamidine cyclo-ligase.